A 110-amino-acid chain; its full sequence is Subtilisin inhibitor-like protein 1 (110 aa).

Disulfide bonds link Cys-30/Cys-44 and Cys-68/Cys-98.

Belongs to the protease inhibitor I16 (SSI) family. Homodimer.

Its subcellular location is the secreted. In terms of biological role, strong inhibitor of subtilisin BPN'. This Streptomyces cacaoi protein is Subtilisin inhibitor-like protein 1.